Reading from the N-terminus, the 107-residue chain is UPF0145 protein YbjQ (107 aa).

It belongs to the UPF0145 family.

This chain is UPF0145 protein YbjQ, found in Escherichia coli (strain SMS-3-5 / SECEC).